Reading from the N-terminus, the 204-residue chain is MSAEKRLLQEYRSILKEQRQKGSASTLSSNGILDLKPVSEDNFYKWTAKLKGPTDTGYQDAFWELQIDIPSNYPTQPPKFTFIVSDDIPRNRRQRQTNQIQDDDEFEGAEKEVLRHCYRMPHPNIAFNTGEICLDILQAKWTPAWTLSSALTAIVLLLNDPEPLSPLDIDMANLMKINDLKAYNSLIEYYVGRYSIEEEVYILN.

A UBC core domain is found at 2–196 (SAEKRLLQEY…IEYYVGRYSI (195 aa)). Residue cysteine 133 is the Glycyl thioester intermediate of the active site.

This sequence belongs to the ubiquitin-conjugating enzyme family.

Its subcellular location is the peroxisome membrane. It carries out the reaction S-ubiquitinyl-[E1 ubiquitin-activating enzyme]-L-cysteine + [E2 ubiquitin-conjugating enzyme]-L-cysteine = [E1 ubiquitin-activating enzyme]-L-cysteine + S-ubiquitinyl-[E2 ubiquitin-conjugating enzyme]-L-cysteine.. The protein operates within protein modification; protein ubiquitination. Its function is as follows. E2 ubiquitin-conjugating enzyme involved in peroxisome biosynthesis. Acts late in peroxisomal matrix protein import, after matrix protein translocation. Required for both monoubiquitination and polyubiquitination of coreceptor PEX20. polyubiquitination of PEX20 at conserved lysine 'Lys-19' near the N-terminus leads to its and proteasomal degradation, whereas a monoubiquitination at the conserved cysteine 'Cys-8' is essential for its recycling. The polypeptide is E2 ubiquitin-conjugating enzyme PEX4 (Komagataella phaffii (strain GS115 / ATCC 20864) (Yeast)).